Here is a 309-residue protein sequence, read N- to C-terminus: ATP synthase gamma chain (309 aa).

This sequence belongs to the ATPase gamma chain family. As to quaternary structure, F-type ATPases have 2 components, CF(1) - the catalytic core - and CF(0) - the membrane proton channel. CF(1) has five subunits: alpha(3), beta(3), gamma(1), delta(1), epsilon(1). CF(0) has three main subunits: a, b and c.

The protein localises to the cell membrane. In terms of biological role, produces ATP from ADP in the presence of a proton gradient across the membrane. The gamma chain is believed to be important in regulating ATPase activity and the flow of protons through the CF(0) complex. This Salinispora tropica (strain ATCC BAA-916 / DSM 44818 / JCM 13857 / NBRC 105044 / CNB-440) protein is ATP synthase gamma chain.